A 328-amino-acid chain; its full sequence is tRNA uridine(34) hydroxylase (328 aa).

Residues 130 to 224 form the Rhodanese domain; sequence LDKDTVVLDT…YGKDPEVQGE (95 aa). The active-site Cysteine persulfide intermediate is cysteine 184.

It belongs to the TrhO family.

It carries out the reaction uridine(34) in tRNA + AH2 + O2 = 5-hydroxyuridine(34) in tRNA + A + H2O. Its function is as follows. Catalyzes oxygen-dependent 5-hydroxyuridine (ho5U) modification at position 34 in tRNAs. The protein is tRNA uridine(34) hydroxylase of Streptococcus pneumoniae (strain P1031).